The primary structure comprises 153 residues: Lipoprotein signal peptidase (153 aa).

3 helical membrane passes run 6–26 (IVAV…SYIV), 60–80 (QQLL…WYLH), and 85–105 (DSFW…GNFI). Catalysis depends on residues D115 and D131. A helical transmembrane segment spans residues 124–144 (FAIFNVADSYLTVGVIILLIA).

This sequence belongs to the peptidase A8 family.

It is found in the cell membrane. It carries out the reaction Release of signal peptides from bacterial membrane prolipoproteins. Hydrolyzes -Xaa-Yaa-Zaa-|-(S,diacylglyceryl)Cys-, in which Xaa is hydrophobic (preferably Leu), and Yaa (Ala or Ser) and Zaa (Gly or Ala) have small, neutral side chains.. Its pathway is protein modification; lipoprotein biosynthesis (signal peptide cleavage). Functionally, this protein specifically catalyzes the removal of signal peptides from prolipoproteins. The polypeptide is Lipoprotein signal peptidase (Streptococcus pneumoniae (strain ATCC BAA-255 / R6)).